Consider the following 463-residue polypeptide: 23S rRNA (uracil(1939)-C(5))-methyltransferase RlmD (463 aa).

A TRAM domain is found at 6-76 (KSRKPQQPEY…KRLEEAEMVE (71 aa)). Residues C90, C96, C99, and C178 each contribute to the [4Fe-4S] cluster site. Positions 288, 317, 322, 341, 368, and 389 each coordinate S-adenosyl-L-methionine. The active-site Nucleophile is C415.

Belongs to the class I-like SAM-binding methyltransferase superfamily. RNA M5U methyltransferase family. RlmD subfamily.

The enzyme catalyses uridine(1939) in 23S rRNA + S-adenosyl-L-methionine = 5-methyluridine(1939) in 23S rRNA + S-adenosyl-L-homocysteine + H(+). Catalyzes the formation of 5-methyl-uridine at position 1939 (m5U1939) in 23S rRNA. The sequence is that of 23S rRNA (uracil(1939)-C(5))-methyltransferase RlmD from Acinetobacter baumannii (strain AYE).